The primary structure comprises 345 residues: MTTRLADIAAQAGVSEATVSRVLNGKPGVAATTRQSVLAALDVLGYERPVRLRRRSAGLVGLVTPELENPIFPAFAQVIGQALTRQGYTPVLATQTPGGSTEDELTEMLVDRGVAGIIYVSGLHADTTADMQRYERLGGRGVPFVLVDGFSSQVQAPFISPDDRAAMSLAVTHLVSLGHTRIGLALGPKRFVPVQRKIEGFVRTVQEPVGAERRSTVEKELVQHSLYTLEGGQAAASALIGRDCTAVVCASDMMALGAIRAARQLGLDVPKDVSVVGFDDSPLIAFTDPPLTTVRKPVPAMGQAAVRTLLEEIGGTPAPHSEFVFMPELVVRGSTASAPGERGRP.

The region spanning 1 to 58 (MTTRLADIAAQAGVSEATVSRVLNGKPGVAATTRQSVLAALDVLGYERPVRLRRRSAG) is the HTH lacI-type domain. A DNA-binding region (H-T-H motif) is located at residues 5–24 (LADIAAQAGVSEATVSRVLN).

In terms of biological role, transcription repressor involved in control of expression of alpha-amylase and chitinase genes and of actinorhodin production. The chain is HTH-type transcriptional regulator reg1 (reg1) from Streptomyces lividans.